We begin with the raw amino-acid sequence, 110 residues long: Waprin-Thr1 (110 aa).

The first 20 residues, 1–20 (MYKKGTILVLAYLLIATAVC), serve as a signal peptide directing secretion. Residues 22–68 (LSYKEGHCPLRNSVSKCIPRCVSDYQCSFNEKCCPNKCGSESCVQAS) enclose the WAP domain. 4 cysteine pairs are disulfide-bonded: Cys29-Cys55, Cys38-Cys59, Cys42-Cys54, and Cys48-Cys64.

This sequence belongs to the venom waprin family. Cys-rich waprin subfamily. Expressed by the venom gland.

Its subcellular location is the secreted. Functionally, antimicrobial peptides with activity against Gram-positive and Gram-negative bacteria as well as fungi. Recognizes carbohydrates in the microbial cell walls, and induces structural damage to them. Also inhibits microbial serine proteases subtilisin A and proteinase K, as well as human and porcine elastases. Carbohydrates that are recognized are LPS, mannan, peptidoglycan, and N-acetl-D-glucosamine. This chain is Waprin-Thr1, found in Apis mellifera (Honeybee).